Reading from the N-terminus, the 142-residue chain is MLDINAIQQILPHRYPFLLVDRILEMEEGKRVVGIKNVTANEPFFPGHFPGYPVMPGVLVIEAMAQVGAVAILSMPAYAGRIALFAGIDKARFRRQVVPGDTLRIEVEVLKLRGTIGKSMARAYVGEELAAEAELMFAIGQK.

Histidine 48 is a catalytic residue.

Belongs to the thioester dehydratase family. FabZ subfamily.

It localises to the cytoplasm. It carries out the reaction a (3R)-hydroxyacyl-[ACP] = a (2E)-enoyl-[ACP] + H2O. In terms of biological role, involved in unsaturated fatty acids biosynthesis. Catalyzes the dehydration of short chain beta-hydroxyacyl-ACPs and long chain saturated and unsaturated beta-hydroxyacyl-ACPs. The sequence is that of 3-hydroxyacyl-[acyl-carrier-protein] dehydratase FabZ from Desulforamulus reducens (strain ATCC BAA-1160 / DSM 100696 / MI-1) (Desulfotomaculum reducens).